Consider the following 466-residue polypeptide: Cysteine--tRNA ligase (466 aa).

C27 provides a ligand contact to Zn(2+). Positions P29–N39 match the 'HIGH' region motif. Residues C207, H232, and E236 each contribute to the Zn(2+) site. The 'KMSKS' region motif lies at K264–S268. Residue K267 coordinates ATP.

Belongs to the class-I aminoacyl-tRNA synthetase family. Monomer. It depends on Zn(2+) as a cofactor.

It is found in the cytoplasm. It carries out the reaction tRNA(Cys) + L-cysteine + ATP = L-cysteinyl-tRNA(Cys) + AMP + diphosphate. This is Cysteine--tRNA ligase from Clostridium novyi (strain NT).